The following is a 695-amino-acid chain: Adhesion G protein-coupled receptor F4 (695 aa).

The signal sequence occupies residues 1-21 (MKMKSQATMICCLVFFLSTEC). The Extracellular portion of the chain corresponds to 22–406 (SHYRSKIHLK…TDKVLDYITC (385 aa)). 12 N-linked (GlcNAc...) asparagine glycosylation sites follow: asparagine 61, asparagine 169, asparagine 177, asparagine 209, asparagine 229, asparagine 250, asparagine 257, asparagine 263, asparagine 264, asparagine 286, asparagine 309, and asparagine 340. Residues 249-397 (HNTSEKSLNF…SILMSSKSMT (149 aa)) enclose the GAIN-B domain. Cystine bridges form between cysteine 349/cysteine 376 and cysteine 364/cysteine 378. A GPS region spans residues 349 to 397 (CVGWHSKKRRWDEKACQMMLDIRNEVKCRCNYTSVVMSFSILMSSKSMT). A glycan (N-linked (GlcNAc...) asparagine) is linked at asparagine 379. Residues 407–427 (IGLSVSILSLVLCLIIEATVW) form a helical membrane-spanning segment. The Cytoplasmic portion of the chain corresponds to 428–440 (SRVVVTEISYMRH). A helical membrane pass occupies residues 441–461 (VCIVNIAVSLLTANVWFIIGS). Over 462–485 (HFNIKAQDYNMCVAVTFFSHFFYL) the chain is Extracellular. The chain crosses the membrane as a helical span at residues 486-506 (SLFFWMLFKALLIIYGILVIF). The Cytoplasmic portion of the chain corresponds to 507–515 (RRMMKSRMM). A helical transmembrane segment spans residues 516–536 (VIGFAIGYGCPLIIAVTTVAI). At 537–561 (TEPEKGYMRPEACWLNWDNTKALLA) the chain is on the extracellular side. The chain crosses the membrane as a helical span at residues 562–582 (FAIPAFVIVAVNLIVVLVVAV). Residues 583 to 606 (NTQRPSIGSSKSQDVVIIMRISKN) lie on the Cytoplasmic side of the membrane. The chain crosses the membrane as a helical span at residues 607-627 (VAILTPLLGLTWGFGIATLIE). Topologically, residues 628–634 (GTSLTFH) are extracellular. A helical transmembrane segment spans residues 635-655 (IIFALLNAFQGFFILLFGTIM). Over 656–695 (DHKIRDALRMRMSSLKGKSRAAENASLGPTNGSKLMNRQG) the chain is Cytoplasmic. The tract at residues 674 to 695 (SRAAENASLGPTNGSKLMNRQG) is disordered. Positions 682-695 (LGPTNGSKLMNRQG) are enriched in polar residues.

The protein belongs to the G-protein coupled receptor 2 family. Adhesion G-protein coupled receptor (ADGR) subfamily.

It localises to the membrane. Functionally, orphan receptor. This chain is Adhesion G protein-coupled receptor F4 (ADGRF4), found in Homo sapiens (Human).